The chain runs to 175 residues: NADH-ubiquinone oxidoreductase chain 6 (175 aa).

A run of 5 helical transmembrane segments spans residues methionine 1 to serine 21, serine 25 to leucine 45, glycine 48 to phenylalanine 68, threonine 88 to isoleucine 108, and tyrosine 149 to methionine 169.

This sequence belongs to the complex I subunit 6 family. Core subunit of respiratory chain NADH dehydrogenase (Complex I) which is composed of 45 different subunits.

Its subcellular location is the mitochondrion inner membrane. It catalyses the reaction a ubiquinone + NADH + 5 H(+)(in) = a ubiquinol + NAD(+) + 4 H(+)(out). Its function is as follows. Core subunit of the mitochondrial membrane respiratory chain NADH dehydrogenase (Complex I) which catalyzes electron transfer from NADH through the respiratory chain, using ubiquinone as an electron acceptor. Essential for the catalytic activity and assembly of complex I. The polypeptide is NADH-ubiquinone oxidoreductase chain 6 (MT-ND6) (Urotrichus talpoides (Japanese shrew mole)).